A 444-amino-acid chain; its full sequence is Gustatory receptor 5a for trehalose (444 aa).

Residues 1–56 (MRQLKGRNRCNRAVRHLKIQGKMWLKNLKSGLEQIRESQVRGTRKNFLHDGSFHEA) are Cytoplasmic-facing. Residues 57 to 77 (VAPVLAVAQCFCLMPVCGISA) traverse the membrane as a helical segment. At 78-178 (PTYRGLSFNR…RARPARRLKL (101 aa)) the chain is on the extracellular side. The chain crosses the membrane as a helical span at residues 179-199 (VAFVLLVVSLMEHLLSIISVV). Residues 200-214 (YYDFCPRRSDPVESY) lie on the Cytoplasmic side of the membrane. The helical transmembrane segment at 215 to 235 (LLGASAQLFEVFPYSNWLAWL) threads the bilayer. The Extracellular portion of the chain corresponds to 236 to 240 (GKIQN). The helical transmembrane segment at 241-261 (VLLTFGWSYMDIFLMMLGMGL) threads the bilayer. At 262 to 305 (SEMLARLNRSLEQQVRQPMPEAYWTWSRTLYRSIVELIREVDDA) the chain is on the cytoplasmic side. Residues 306 to 326 (VSGIMLISFGSNLYFICLQLL) traverse the membrane as a helical segment. The Extracellular segment spans residues 327–338 (KSINTMPSSAHA). A helical transmembrane segment spans residues 339-359 (VYFYFSLLFLLSRSTAVLLFV). The Cytoplasmic portion of the chain corresponds to 360 to 410 (SAINDQAREPLRLLRLVPLKGYHPEVFRFAAELASDQVALTGLKFFNVTRK). The helical transmembrane segment at 411–431 (LFLAMAGTVATYELVLIQFHE) threads the bilayer. At 432-444 (DKKTWDCSPFNLD) the chain is on the extracellular side.

This sequence belongs to the insect chemoreceptor superfamily. Gustatory receptor (GR) family. Gr5a subfamily. In terms of tissue distribution, expressed in labellar chemosensory neurons.

The protein localises to the cell membrane. Gustatory receptor required for response to the sugar trehalose in taste neurons. Gr5a neurons selectively respond to sugars, in contrast to Gr66a cells which respond to bitter compounds. Flies are attracted to sugars and avoid bitter substances, suggesting that Gr5a neuron activity is sufficient to mediate acceptance behavior. Sugar signal transduction occurs through coupling with G-proteins such as Galpha49B and G-salpha60A. The polypeptide is Gustatory receptor 5a for trehalose (Gr5a) (Drosophila melanogaster (Fruit fly)).